The chain runs to 266 residues: MDLFQTLVLALVQGLTEFLPISSAAHLILVPELTDWDDQGLAFDVATHVGSLAAVVIYFRHELRRMTAEWLGSLAGRGLTPDAKLAWAVGLGTIPAGLAGLLFHDIIATHLRSAQVIAMATIGFAVLLLFADVSGKRTRDEHSITWKDVLVIGVAQALALIPGTSRSGITITAALLMGFTRQAAARYSFLLSIPIIALAGGFEILGLVKEPEENIQWGMIVLGALVAGVSAYLCIHYFLKLLAKMTMLPFVIYRLVLGAFLLFLFW.

7 helical membrane passes run 8 to 28, 39 to 59, 87 to 107, 113 to 133, 188 to 208, 219 to 239, and 246 to 266; these read VLALVQGLTEFLPISSAAHLI, QGLAFDVATHVGSLAAVVIYF, WAVGLGTIPAGLAGLLFHDII, SAQVIAMATIGFAVLLLFADV, SFLLSIPIIALAGGFEILGLV, MIVLGALVAGVSAYLCIHYFL, and TMLPFVIYRLVLGAFLLFLFW.

This sequence belongs to the UppP family.

It is found in the cell inner membrane. The catalysed reaction is di-trans,octa-cis-undecaprenyl diphosphate + H2O = di-trans,octa-cis-undecaprenyl phosphate + phosphate + H(+). Its function is as follows. Catalyzes the dephosphorylation of undecaprenyl diphosphate (UPP). Confers resistance to bacitracin. The protein is Undecaprenyl-diphosphatase of Thioalkalivibrio sulfidiphilus (strain HL-EbGR7).